Reading from the N-terminus, the 623-residue chain is Chaperone protein HtpG (623 aa).

The tract at residues 1 to 336 (MSMKGQETRG…SNDLPLNVSR (336 aa)) is a; substrate-binding. The b stretch occupies residues 337–551 (EILQDSRVTQ…ADEMSTQMAK (215 aa)). The tract at residues 552–623 (LFAAAGQEAP…IRRMNKLLSA (72 aa)) is c.

It belongs to the heat shock protein 90 family. As to quaternary structure, homodimer.

Its subcellular location is the cytoplasm. Functionally, molecular chaperone. Has ATPase activity. This chain is Chaperone protein HtpG, found in Serratia proteamaculans (strain 568).